A 458-amino-acid polypeptide reads, in one-letter code: Bifunctional protein GlmU (458 aa).

The interval 1–231 (MSNRALSVVV…QTEVEGVNNR (231 aa)) is pyrophosphorylase. UDP-N-acetyl-alpha-D-glucosamine is bound by residues 11–14 (LAAG), lysine 25, glutamine 78, 83–84 (GT), 105–107 (YGD), glycine 142, glutamate 156, asparagine 171, and asparagine 229. Aspartate 107 contributes to the Mg(2+) binding site. Asparagine 229 contacts Mg(2+). The linker stretch occupies residues 232 to 252 (LQLARLERLFQREQAERLLLA). The interval 253 to 458 (GVMLSDPDRF…ANWTRPVKKK (206 aa)) is N-acetyltransferase. The UDP-N-acetyl-alpha-D-glucosamine site is built by arginine 335 and lysine 353. Histidine 365 serves as the catalytic Proton acceptor. Residues tyrosine 368 and asparagine 379 each contribute to the UDP-N-acetyl-alpha-D-glucosamine site. Acetyl-CoA contacts are provided by residues alanine 382, 388–389 (NY), serine 407, alanine 425, and arginine 442.

The protein in the N-terminal section; belongs to the N-acetylglucosamine-1-phosphate uridyltransferase family. This sequence in the C-terminal section; belongs to the transferase hexapeptide repeat family. Homotrimer. Mg(2+) serves as cofactor.

It localises to the cytoplasm. It catalyses the reaction alpha-D-glucosamine 1-phosphate + acetyl-CoA = N-acetyl-alpha-D-glucosamine 1-phosphate + CoA + H(+). The catalysed reaction is N-acetyl-alpha-D-glucosamine 1-phosphate + UTP + H(+) = UDP-N-acetyl-alpha-D-glucosamine + diphosphate. It participates in nucleotide-sugar biosynthesis; UDP-N-acetyl-alpha-D-glucosamine biosynthesis; N-acetyl-alpha-D-glucosamine 1-phosphate from alpha-D-glucosamine 6-phosphate (route II): step 2/2. The protein operates within nucleotide-sugar biosynthesis; UDP-N-acetyl-alpha-D-glucosamine biosynthesis; UDP-N-acetyl-alpha-D-glucosamine from N-acetyl-alpha-D-glucosamine 1-phosphate: step 1/1. It functions in the pathway bacterial outer membrane biogenesis; LPS lipid A biosynthesis. Its function is as follows. Catalyzes the last two sequential reactions in the de novo biosynthetic pathway for UDP-N-acetylglucosamine (UDP-GlcNAc). The C-terminal domain catalyzes the transfer of acetyl group from acetyl coenzyme A to glucosamine-1-phosphate (GlcN-1-P) to produce N-acetylglucosamine-1-phosphate (GlcNAc-1-P), which is converted into UDP-GlcNAc by the transfer of uridine 5-monophosphate (from uridine 5-triphosphate), a reaction catalyzed by the N-terminal domain. This Sodalis glossinidius (strain morsitans) protein is Bifunctional protein GlmU.